The chain runs to 952 residues: Ubiquitin carboxyl-terminal hydrolase CYLD (952 aa).

The segment at 106 to 589 (CEERLSLFRN…LEIMIGKKKG (484 aa)) is interaction with TRIP. CAP-Gly domains are found at residues 153–198 (LAER…VFVA) and 253–286 (DVLP…VQLC). The segment at 311-350 (RRPPKLAFMSRGVGDKGSSSHNKPKVTGSTSDPGSRNRSE) is disordered. The segment covering 327-346 (GSSSHNKPKVTGSTSDPGSR) has biased composition (polar residues). Position 383 is a phosphoserine (S383). The tract at residues 386–409 (EMSSDFGHSSPPPQPPSMNSLSSE) is disordered. Positions 390–465 (DFGHSSPPPQ…LPISSGNAHG (76 aa)) are interaction with TRAF2. A phosphoserine mark is found at S414 and S418. The interval 466–680 (LEVGSLAEVK…FTSEEKDPEE (215 aa)) is interaction with IKBKG/NEMO. The 44-residue stretch at 488–531 (GQPPGLSDVLAGLELEDECAGCTDGTFRGTRYFTCALKKALFVK) folds into the CAP-Gly 3 domain. A USP domain is found at 588-946 (KGIQGHYNSC…DAYMCMYQSP (359 aa)). The Nucleophile role is filled by C597. The B-box stretch occupies residues 777–829 (LEDTPRQCRICGGLAMYECRECYDDPDISAGKIKQFCKTCSTQVHLHPRRLNH). Positions 784, 787, 795, 798, 813, 816, 821, and 829 each coordinate Zn(2+). H867 (proton acceptor) is an active-site residue.

Belongs to the peptidase C19 family. As to quaternary structure, interacts (via CAP-Gly domain) with IKBKG/NEMO (via proline-rich C-terminal region). Interacts with TRAF2 and TRIP. Interacts with PLK1, DVL1, DVL3, MAVS, TBK1, IKKE and RIGI. Interacts (via CAP-Gly domain) with microtubules. Interacts with HDAC6 and BCL3. Interacts with MAP3K7. Identified in a complex with TRAF6 and SQSTM1. Interacts with OPTN and SQSTM1. Interacts with CEP350. Interacts with RNF31; the interaction is indirect and is mediated via SPATA2. Interacts with SPATA2 (via the PUB domain); the interaction is direct and recruits CYLD to the LUBAC complex, thereby regulating TNF-alpha-induced necroptosis. In terms of processing, phosphorylated on several serine residues by IKKA and/or IKKB in response to immune stimuli. Phosphorylation requires IKBKG. Phosphorylation abolishes TRAF2 deubiquitination, interferes with the activation of Jun kinases, and strongly reduces CD40-dependent gene activation by NF-kappa-B. Ubiquitinated. Polyubiquitinated in hepatocytes treated with palmitic acid. Ubiquitination is mediated by E3 ligase TRIM47 and leads to proteasomal degradation.

Its subcellular location is the cytoplasm. It is found in the perinuclear region. It localises to the cytoskeleton. The protein localises to the cell membrane. The protein resides in the microtubule organizing center. Its subcellular location is the centrosome. It is found in the spindle. It localises to the cilium basal body. The catalysed reaction is Thiol-dependent hydrolysis of ester, thioester, amide, peptide and isopeptide bonds formed by the C-terminal Gly of ubiquitin (a 76-residue protein attached to proteins as an intracellular targeting signal).. Functionally, deubiquitinase that specifically cleaves 'Lys-63'- and linear 'Met-1'-linked polyubiquitin chains and is involved in NF-kappa-B activation and TNF-alpha-induced necroptosis. Negatively regulates NF-kappa-B activation by deubiquitinating upstream signaling factors. Contributes to the regulation of cell survival, proliferation and differentiation via its effects on NF-kappa-B activation. Negative regulator of Wnt signaling. Inhibits HDAC6 and thereby promotes acetylation of alpha-tubulin and stabilization of microtubules. Plays a role in the regulation of microtubule dynamics, and thereby contributes to the regulation of cell proliferation, cell polarization, cell migration, and angiogenesis. Required for normal cell cycle progress and normal cytokinesis. Inhibits nuclear translocation of NF-kappa-B. Plays a role in the regulation of inflammation and the innate immune response, via its effects on NF-kappa-B activation. Dispensable for the maturation of intrathymic natural killer cells, but required for the continued survival of immature natural killer cells. Negatively regulates TNFRSF11A signaling and osteoclastogenesis. Involved in the regulation of ciliogenesis, allowing ciliary basal bodies to migrate and dock to the plasma membrane; this process does not depend on NF-kappa-B activation. Ability to remove linear ('Met-1'-linked) polyubiquitin chains regulates innate immunity and TNF-alpha-induced necroptosis: recruited to the LUBAC complex via interaction with SPATA2 and restricts linear polyubiquitin formation on target proteins. Regulates innate immunity by restricting linear polyubiquitin formation on RIPK2 in response to NOD2 stimulation. Involved in TNF-alpha-induced necroptosis by removing linear ('Met-1'-linked) polyubiquitin chains from RIPK1, thereby regulating the kinase activity of RIPK1. Negatively regulates intestinal inflammation by removing 'Lys-63' linked polyubiquitin chain of NLRP6, thereby reducing the interaction between NLRP6 and PYCARD/ASC and formation of the NLRP6 inflammasome. Does not catalyze deubiquitination of heterotypic 'Lys-63'-/'Lys-48'-linked branched ubiquitin chains. Removes 'Lys-63' linked polyubiquitin chain of MAP3K7, which inhibits phosphorylation and blocks downstream activation of the JNK-p38 kinase cascades. Also removes 'Lys-63'-linked polyubiquitin chains of MAP3K1 and MA3P3K3, which inhibit their interaction with MAP2K1 and MAP2K2. The sequence is that of Ubiquitin carboxyl-terminal hydrolase CYLD (Cyld) from Mus musculus (Mouse).